We begin with the raw amino-acid sequence, 247 residues long: Translation initiation factor IF-3 (247 aa).

Disordered regions lie at residues 1 to 20 (MIRE…TNRR) and 188 to 247 (LVRQ…PTAS). The needed for vegetative and developmental functions, but not for viability stretch occupies residues 182–247 (AQKARELVRQ…AAEAQSPTAS (66 aa)). Low complexity predominate over residues 207–217 (AGKSAAGASSG). Positions 218-232 (AEEKAEETAEEKKEA) are enriched in basic and acidic residues. The segment covering 233–247 (QAAPAAAEAQSPTAS) has biased composition (low complexity).

It belongs to the IF-3 family. As to quaternary structure, monomer.

The protein localises to the cytoplasm. In terms of biological role, IF-3 binds to the 30S ribosomal subunit and shifts the equilibrium between 70S ribosomes and their 50S and 30S subunits in favor of the free subunits, thus enhancing the availability of 30S subunits on which protein synthesis initiation begins. The chain is Translation initiation factor IF-3 from Myxococcus xanthus.